A 763-amino-acid polypeptide reads, in one-letter code: Pentatricopeptide repeat-containing protein At4g32430, mitochondrial (763 aa).

Residues 1–38 constitute a mitochondrion transit peptide; that stretch reads MTLLNYLHCNRSKSFLFQRFYSPYRIAHKLFDGSSQRN. 17 PPR repeats span residues 77–109, 110–140, 141–172, 173–207, 208–238, 239–274, 275–309, 310–344, 350–370, 371–405, 406–436, 437–471, 472–507, 508–538, 539–573, 574–604, and 610–640; these read DEVTLCLALKACRGDLKRGCQIHGFSTTSGFTS, FVCVSNAVMGMYRKAGRFDNALCIFENLVDP, DVVSWNTILSGFDDNQIALNFVVRMKSAGVVF, DAFTYSTALSFCVGSEGFLLGLQLQSTVVKTGLES, DLVVGNSFITMYSRSGSFRGARRVFDEMSFK, DMISWNSLLSGLSQEGTFGFEAVVIFRDMMREGVEL, DHVSFTSVITTCCHETDLKLARQIHGLCIKRGYES, LLEVGNILMSRYSKCGVLEAVKSVFHQMSERNVVS, SSNKDDAVSIFLNMRFDGVYP, NEVTFVGLINAVKCNEQIKEGLKIHGLCIKTGFVS, EPSVGNSFITLYAKFEALEDAKKAFEDITFR, EIISWNAMISGFAQNGFSHEALKMFLSAAAETMPN, EYTFGSVLNAIAFAEDISVKQGQRCHAHLLKLGLNS, CPVVSSALLDMYAKRGNIDESEKVFNEMSQK, NQFVWTSIISAYSSHGDFETVMNLFHKMIKENVAP, DLVTFLSVLTACNRKGMVDKGYEIFNMMIEV, and SHEHYSCMVDMLGRAGRLKEAEELMSEVPGG. A type E motif region spans residues 645–720; it reads MLQSMLGSCR…EAGFSWIDVG (76 aa). The interval 724–756 is type E(+) motif; sequence GSLTMQGFSSGDKSHPKSDEIYRMVEIIGLEMN.

It belongs to the PPR family. PCMP-E subfamily.

The protein localises to the mitochondrion. The chain is Pentatricopeptide repeat-containing protein At4g32430, mitochondrial (PCMP-E40) from Arabidopsis thaliana (Mouse-ear cress).